Reading from the N-terminus, the 486-residue chain is Aromatic-L-amino-acid decarboxylase (486 aa).

Met-1 bears the N-acetylmethionine mark. Repeat copies occupy residues 58-115 (QDVE…TELE) and 118-178 (MMDW…TQGA). The tract at residues 58–178 (QDVEKIIMPG…AASPGLTQGA (121 aa)) is 2 X approximate tandem repeats. Thr-82 lines the substrate pocket. The pyridoxal 5'-phosphate site is built by Ala-148 and Ser-149. Residue His-192 coordinates substrate. Residues Thr-246 and Asn-300 each contribute to the pyridoxal 5'-phosphate site. Lys-303 is subject to N6-(pyridoxal phosphate)lysine.

Belongs to the group II decarboxylase family. As to quaternary structure, homodimer. Pyridoxal 5'-phosphate is required as a cofactor.

It carries out the reaction L-dopa + H(+) = dopamine + CO2. The enzyme catalyses 5-hydroxy-L-tryptophan + H(+) = serotonin + CO2. It participates in catecholamine biosynthesis; dopamine biosynthesis; dopamine from L-tyrosine: step 2/2. Its function is as follows. Catalyzes the decarboxylation of L-3,4-dihydroxyphenylalanine (DOPA) to dopamine and L-5-hydroxytryptophan to serotonin. This chain is Aromatic-L-amino-acid decarboxylase (DDC), found in Sus scrofa (Pig).